A 284-amino-acid chain; its full sequence is Quinate/shikimate dehydrogenase (NAD(+)) (284 aa).

Residues Ser-18 and Thr-70 each contribute to the shikimate site. Residues 18–20 and Thr-70 contribute to the L-quinate site; that span reads SRT. Catalysis depends on Tyr-73, which acts as the Proton acceptor. Residues Lys-74, Asn-95, and Asp-111 each contribute to the shikimate site. The L-quinate site is built by Lys-74, Asn-95, and Asp-111. Residues 137-138, Asp-159, Arg-164, 203-206, Ala-214, Val-229, and Gly-252 contribute to the NAD(+) site; these read GG and TPMG. Gln-259 is a shikimate binding site. Residue Gln-259 coordinates L-quinate.

This sequence belongs to the shikimate dehydrogenase family. As to quaternary structure, homodimer.

The enzyme catalyses L-quinate + NAD(+) = 3-dehydroquinate + NADH + H(+). The catalysed reaction is shikimate + NAD(+) = 3-dehydroshikimate + NADH + H(+). The protein operates within metabolic intermediate biosynthesis; chorismate biosynthesis; chorismate from D-erythrose 4-phosphate and phosphoenolpyruvate: step 4/7. It participates in aromatic compound metabolism; 3,4-dihydroxybenzoate biosynthesis; 3-dehydroquinate from D-quinate (NAD(+) route). Functionally, involved in the biosynthesis of the chorismate, which leads to the biosynthesis of aromatic amino acids, and plays a key role in the quinate degradation pathway. Catalyzes the NAD(+)-dependent oxidation of both quinate and shikimate to 3-dehydroquinate and 3-dehydroshikimate, respectively. It can only use NAD. The polypeptide is Quinate/shikimate dehydrogenase (NAD(+)) (Corynebacterium efficiens (strain DSM 44549 / YS-314 / AJ 12310 / JCM 11189 / NBRC 100395)).